Reading from the N-terminus, the 715-residue chain is Transcription factor MST12 (715 aa).

Residues 214–224 are compositionally biased toward low complexity; sequence SSSFNAQQVSF. Disordered regions lie at residues 214–243, 439–469, and 518–539; these read SSSF…MPPP, AAHR…NSPP, and PMPS…AQGG. 2 C2H2-type zinc fingers span residues 564 to 588 and 594 to 616; these read HSCP…VRTH and YICP…KRTH. A disordered region spans residues 632–691; the sequence is EEEYSGDDHLGSLEEASPTSEGGYVTSSLNSAMAHSNTSQHPGSNAVSPNPGPMSHAPTY. Over residues 648-679 the composition is skewed to polar residues; it reads SPTSEGGYVTSSLNSAMAHSNTSQHPGSNAVS.

Belongs to the STE12 transcription factor family.

It localises to the nucleus. Transcription factor that may function downstream of PMK1 to regulate genes involved in infectious hyphae growth. Is not essential for vegetative growth, conidiation or appressorium formation. May be involved in the regulation of the expression of the cell surface sensor MSB2. This Pyricularia oryzae (strain 70-15 / ATCC MYA-4617 / FGSC 8958) (Rice blast fungus) protein is Transcription factor MST12.